The chain runs to 491 residues: MSSSLASRRSSSSSAAKRPAAGEGGGKAAAGAAAAKKRVALGNITNVAAAANNAKFNSATWAAPVKKGSLASGRNVGTNRVSAVKSASTKPASAISRHESAPQKESVLPPKVLRIVPTAAPAPVTVPCSSFVSPMHSGDSVSVDETMSTCDSMKSPDFEYIDNGDSSSVLGSLQRRANENLRISEDRDVEETKWKKDAPSPMEIDQICDVDNNYEDPQLCATLASDIYMHLREAETRKHPSTDFMETLQKDVNPSMRAILIDWLVEVAEEYRLVPDTLYLTVNYIDRYLSGNEINRQRLQLLGVACMLIAAKYKEICAPQVEEFCYITDNTYFRDEVLEMEASVLNYLKFEMTAPTAKCFLRRFVRVAQVSDEDPALHLEFLANYVAELSLLEYNLLSYPPSLVAASAIFLAKFILQPAKHPWNSTLAHYTQYKSSELSDCVKALHRLFCVGPGSNLPAIREKYTQHKYKFVAKKPCPPSIPTEFFRDSTC.

Residues 1–21 (MSSSLASRRSSSSSAAKRPAA) show a composition bias toward low complexity. 2 disordered regions span residues 1 to 32 (MSSS…AAGA) and 69 to 106 (SLAS…QKES). Over residues 75-91 (NVGTNRVSAVKSASTKP) the composition is skewed to polar residues.

This sequence belongs to the cyclin family. Cyclin AB subfamily.

This chain is Cyclin-A1-3 (CYCA1-3), found in Oryza sativa subsp. japonica (Rice).